We begin with the raw amino-acid sequence, 421 residues long: Gamma-glutamyl phosphate reductase (421 aa).

This sequence belongs to the gamma-glutamyl phosphate reductase family.

Its subcellular location is the cytoplasm. The catalysed reaction is L-glutamate 5-semialdehyde + phosphate + NADP(+) = L-glutamyl 5-phosphate + NADPH + H(+). Its pathway is amino-acid biosynthesis; L-proline biosynthesis; L-glutamate 5-semialdehyde from L-glutamate: step 2/2. Functionally, catalyzes the NADPH-dependent reduction of L-glutamate 5-phosphate into L-glutamate 5-semialdehyde and phosphate. The product spontaneously undergoes cyclization to form 1-pyrroline-5-carboxylate. In Brucella melitensis biotype 1 (strain ATCC 23456 / CCUG 17765 / NCTC 10094 / 16M), this protein is Gamma-glutamyl phosphate reductase.